A 280-amino-acid polypeptide reads, in one-letter code: Energy-coupling factor transporter ATP-binding protein EcfA1 (280 aa).

The region spanning 6–241 (LRTENISFQY…SHMLQEIGLD (236 aa)) is the ABC transporter domain. An ATP-binding site is contributed by 40–47 (GQNGSGKS).

This sequence belongs to the ABC transporter superfamily. Energy-coupling factor EcfA family. In terms of assembly, forms a stable energy-coupling factor (ECF) transporter complex composed of 2 membrane-embedded substrate-binding proteins (S component), 2 ATP-binding proteins (A component) and 2 transmembrane proteins (T component).

Its subcellular location is the cell membrane. Functionally, ATP-binding (A) component of a common energy-coupling factor (ECF) ABC-transporter complex. Unlike classic ABC transporters this ECF transporter provides the energy necessary to transport a number of different substrates. This chain is Energy-coupling factor transporter ATP-binding protein EcfA1, found in Bacillus cereus (strain ZK / E33L).